We begin with the raw amino-acid sequence, 325 residues long: Elongation factor P--(R)-beta-lysine ligase (325 aa).

76 to 78 (SPE) contributes to the substrate binding site. Residues 100-102 (RNE) and Asn109 contribute to the ATP site. Tyr118 is a substrate binding site. Position 244-245 (244-245 (EL)) interacts with ATP. Glu251 contacts substrate. Gly300 provides a ligand contact to ATP.

It belongs to the class-II aminoacyl-tRNA synthetase family. EpmA subfamily. As to quaternary structure, homodimer.

It carries out the reaction D-beta-lysine + L-lysyl-[protein] + ATP = N(6)-((3R)-3,6-diaminohexanoyl)-L-lysyl-[protein] + AMP + diphosphate + H(+). Functionally, with EpmB is involved in the beta-lysylation step of the post-translational modification of translation elongation factor P (EF-P) on 'Lys-34'. Catalyzes the ATP-dependent activation of (R)-beta-lysine produced by EpmB, forming a lysyl-adenylate, from which the beta-lysyl moiety is then transferred to the epsilon-amino group of EF-P 'Lys-34'. In Salmonella paratyphi A (strain ATCC 9150 / SARB42), this protein is Elongation factor P--(R)-beta-lysine ligase.